Consider the following 159-residue polypeptide: Ribosome-binding factor A (159 aa).

2 stretches are compositionally biased toward basic and acidic residues: residues 118–128 (AADDEVAKARE) and 137–146 (DPYKEPRVAS). The disordered stretch occupies residues 118 to 159 (AADDEVAKARENAQPAGDADPYKEPRVASDEDEASPDVREAD).

The protein belongs to the RbfA family. As to quaternary structure, monomer. Binds 30S ribosomal subunits, but not 50S ribosomal subunits or 70S ribosomes.

The protein localises to the cytoplasm. One of several proteins that assist in the late maturation steps of the functional core of the 30S ribosomal subunit. Associates with free 30S ribosomal subunits (but not with 30S subunits that are part of 70S ribosomes or polysomes). Required for efficient processing of 16S rRNA. May interact with the 5'-terminal helix region of 16S rRNA. In Rhodococcus erythropolis (strain PR4 / NBRC 100887), this protein is Ribosome-binding factor A.